Here is a 200-residue protein sequence, read N- to C-terminus: MELQVVGANALTVSETTFGREFNEALIHQVVVAYAAGARQGSRAQKTRAEVSGSGKKPWRQKGTGRARSGDIKSPIWRSGGVTFAAKPQDHSQKVNKKMYRGAIKSILSELVRQDRLIVVEKFEVEAPKTKVLVQKLKELALEDVLIITASLDENLFLAARNLYKVDVRDVQGIDPVSLIAFDKVVVTVDAVKQIEEMLA.

Residues 43–71 (RAQKTRAEVSGSGKKPWRQKGTGRARSGD) form a disordered region.

It belongs to the universal ribosomal protein uL4 family. Part of the 50S ribosomal subunit.

Functionally, one of the primary rRNA binding proteins, this protein initially binds near the 5'-end of the 23S rRNA. It is important during the early stages of 50S assembly. It makes multiple contacts with different domains of the 23S rRNA in the assembled 50S subunit and ribosome. Its function is as follows. Forms part of the polypeptide exit tunnel. The polypeptide is Large ribosomal subunit protein uL4 (Pasteurella multocida (strain Pm70)).